The primary structure comprises 196 residues: Rac-like GTP-binding protein RAC13 (196 aa).

Residue 13 to 20 coordinates GTP; that stretch reads GDGAVGKT. The Effector region motif lies at 35–43; sequence YVPTVFDNF. GTP contacts are provided by residues 60 to 64 and 118 to 121; these read DTAGQ and TKLD. C193 bears the Cysteine methyl ester mark. Residue C193 is the site of S-geranylgeranyl cysteine attachment. Residues 194–196 constitute a propeptide, removed in mature form; the sequence is AFL.

It belongs to the small GTPase superfamily. Rho family.

The protein resides in the cytoplasm. The protein localises to the membrane. Functionally, could participate in a signal transduction pathway that controls cytoskeletal organization. Its function is as follows. Inactive GDP-bound Rho GTPases reside in the cytosol, are found in a complex with Rho GDP-dissociation inhibitors (Rho GDIs), and are released from the GDI protein in order to translocate to membranes upon activation. This chain is Rac-like GTP-binding protein RAC13 (RAC13), found in Gossypium hirsutum (Upland cotton).